Consider the following 54-residue polypeptide: Kazal-type inhibitor-like protein (54 aa).

One can recognise a Kazal-like domain in the interval M1–K54. 3 cysteine pairs are disulfide-bonded: C5–C35, C13–C32, and C21–C53.

As to quaternary structure, may form disulfide-linked dimers or trimers (in vitro). In terms of tissue distribution, expressed by the venom gland.

The protein resides in the secreted. Partially inhibits trypsin in vitro at slightly acidic pH and concentrations in excess of 0.3 mM. Has no protease inhibitory activity at neutral or basic pH. Has no antibacterial activity. Shows no toxicity in vertebrates apart from transient paw edema in mouse. The polypeptide is Kazal-type inhibitor-like protein (Bothriechis schlegelii (Eyelash palm pitviper)).